Consider the following 288-residue polypeptide: Undecaprenyl-diphosphatase (288 aa).

A run of 8 helical transmembrane segments spans residues 25–45 (GITEWLPISSTGHLILVNEFL), 53–73 (FIDMFNIVMHLGAILAVMVIY), 93–113 (WKLWLKVVIACIPSAFFGLLL), 121–141 (LSNFFVVAIMLVVYGIAFIWI), 171–191 (VLSIIPGTSRSGATILGGIIV), 196–216 (SVAADFTFFLGIPTMFGYSGL), 231–251 (GQAAILLVASVTAFLVSLFVI), and 263–283 (FTVFGKYRIVLGIIVLFYGAV).

It belongs to the UppP family.

It localises to the cell membrane. It catalyses the reaction di-trans,octa-cis-undecaprenyl diphosphate + H2O = di-trans,octa-cis-undecaprenyl phosphate + phosphate + H(+). Catalyzes the dephosphorylation of undecaprenyl diphosphate (UPP). Confers resistance to bacitracin. The chain is Undecaprenyl-diphosphatase from Streptococcus thermophilus (strain CNRZ 1066).